We begin with the raw amino-acid sequence, 257 residues long: Hydroxyacylglutathione hydrolase (257 aa).

7 residues coordinate Zn(2+): His-54, His-56, Asp-58, His-59, His-113, Asp-137, and His-175.

This sequence belongs to the metallo-beta-lactamase superfamily. Glyoxalase II family. As to quaternary structure, monomer. Zn(2+) serves as cofactor.

The catalysed reaction is an S-(2-hydroxyacyl)glutathione + H2O = a 2-hydroxy carboxylate + glutathione + H(+). It participates in secondary metabolite metabolism; methylglyoxal degradation; (R)-lactate from methylglyoxal: step 2/2. Thiolesterase that catalyzes the hydrolysis of S-D-lactoyl-glutathione to form glutathione and D-lactic acid. This Microcystis aeruginosa (strain NIES-843 / IAM M-2473) protein is Hydroxyacylglutathione hydrolase.